The chain runs to 1233 residues: ATP-dependent helicase/nuclease subunit A (1233 aa).

The UvrD-like helicase ATP-binding domain maps to 3 to 474; it reads TKWTEEQKQA…ILLYKNFRSR (472 aa). ATP is bound at residue 24–31; the sequence is AAAGSGKT. The region spanning 518–809 is the UvrD-like helicase C-terminal domain; sequence VTGGAVELHL…RIMSIHKSKG (292 aa). Residues 533-555 form a disordered region; that stretch reads VEEEVEEKEEEKNEEKDFEEEEE.

This sequence belongs to the helicase family. AddA subfamily. Heterodimer of AddA and AddB/RexB. Mg(2+) serves as cofactor.

The enzyme catalyses Couples ATP hydrolysis with the unwinding of duplex DNA by translocating in the 3'-5' direction.. It carries out the reaction ATP + H2O = ADP + phosphate + H(+). The heterodimer acts as both an ATP-dependent DNA helicase and an ATP-dependent, dual-direction single-stranded exonuclease. Recognizes the chi site generating a DNA molecule suitable for the initiation of homologous recombination. The AddA nuclease domain is required for chi fragment generation; this subunit has the helicase and 3' -&gt; 5' nuclease activities. In Thermoanaerobacter pseudethanolicus (strain ATCC 33223 / 39E) (Clostridium thermohydrosulfuricum), this protein is ATP-dependent helicase/nuclease subunit A.